Consider the following 306-residue polypeptide: MVKGTWTHRTVLLNEAITALQVNPDGHYIDATFGRGGHSRLLLSQLSALGRVTAFDKDLDAIAEAQSIDDPRFSIRHQGFMHLDQMPQASVAGVLMDLGVSSPQIDNPERGFSFRNEGPLDMRMDTTRGQSVAEWLQDASIEAMTEVIRDYGEERFAGLVARAIDRRRQEHGPLQTTAELADVVASAVKTREPGKDPATRTFQALRIFINAELEELQQALQASLKVLQPGGRLVVISFHSLEDRIVKQFIAAHSREVYDRRAPFAAPKVMQLKALGRTKASEEEVAGNPRSRSAVMRVAERTGEAA.

S-adenosyl-L-methionine contacts are provided by residues Gly-36–His-38, Asp-56, Phe-80, Asp-97, and Gln-104. Residues Ala-280–Ala-306 form a disordered region.

The protein belongs to the methyltransferase superfamily. RsmH family.

Its subcellular location is the cytoplasm. The catalysed reaction is cytidine(1402) in 16S rRNA + S-adenosyl-L-methionine = N(4)-methylcytidine(1402) in 16S rRNA + S-adenosyl-L-homocysteine + H(+). In terms of biological role, specifically methylates the N4 position of cytidine in position 1402 (C1402) of 16S rRNA. The sequence is that of Ribosomal RNA small subunit methyltransferase H from Polaromonas naphthalenivorans (strain CJ2).